Consider the following 312-residue polypeptide: Glyoxylate/hydroxypyruvate reductase A (312 aa).

Arg-227 is a catalytic residue. Catalysis depends on His-275, which acts as the Proton donor.

It belongs to the D-isomer specific 2-hydroxyacid dehydrogenase family. GhrA subfamily.

The protein localises to the cytoplasm. The enzyme catalyses glycolate + NADP(+) = glyoxylate + NADPH + H(+). It catalyses the reaction (R)-glycerate + NAD(+) = 3-hydroxypyruvate + NADH + H(+). The catalysed reaction is (R)-glycerate + NADP(+) = 3-hydroxypyruvate + NADPH + H(+). Catalyzes the NADPH-dependent reduction of glyoxylate and hydroxypyruvate into glycolate and glycerate, respectively. The protein is Glyoxylate/hydroxypyruvate reductase A of Escherichia coli O127:H6 (strain E2348/69 / EPEC).